A 398-amino-acid polypeptide reads, in one-letter code: Secreted aspartic protease 2 (398 aa).

The first 18 residues, 1–18, serve as a signal peptide directing secretion; that stretch reads MFLKNIFIALAIALLVDA. The propeptide at 19 to 56 is activation peptide; that stretch reads TPTTTKRSAGFVALDFSVVKTPKAFPVTNGQEGKTSKR. A Peptidase A1 domain is found at 70–384; that stretch reads YAADITVGSN…DLDDNEISLA (315 aa). D88 is an active-site residue. Position 88 to 90 (88 to 90) interacts with pepstatin A; that stretch reads DTG. Residues C103 and C115 are joined by a disulfide bond. 141–142 provides a ligand contact to pepstatin A; that stretch reads GD. Zn(2+) is bound by residues D247 and D270. D274 is a catalytic residue. 274-278 lines the pepstatin A pocket; sequence DSGTT. Cysteines 312 and 350 form a disulfide. N313 and N321 each carry an N-linked (GlcNAc...) asparagine glycan.

Belongs to the peptidase A1 family. As to quaternary structure, monomer.

The protein resides in the secreted. The enzyme catalyses Preferential cleavage at the carboxyl of hydrophobic amino acids, but fails to cleave 15-Leu-|-Tyr-16, 16-Tyr-|-Leu-17 and 24-Phe-|-Phe-25 of insulin B chain. Activates trypsinogen, and degrades keratin.. Secreted aspartic peptidases (SAPs) are a group of ten acidic hydrolases considered as key virulence factors. These enzymes supply the fungus with nutrient amino acids as well as are able to degrade the selected host's proteins involved in the immune defense. Induces host inflammatory cytokine production in a proteolytic activity-independent way. Plays a role in tissue damage during superficial infection. Moreover, acts toward human hemoglobin though limited proteolysis to generate a variety of antimicrobial hemocidins, enabling to compete with the other microorganisms of the same physiological niche using the microbicidal peptides generated from the host protein. Its function is as follows. Plays a key role in defense against host by cleaving histatin-5 (Hst 5), a peptide from human saliva that carries out fungicidal activity. The cleavage rate decreases in an order of SAP2 &gt; SAP9 &gt; SAP3 &gt; SAP7 &gt; SAP4 &gt; SAP1 &gt; SAP8. The first cleavage occurs between residues 'Lys-17' and 'His-18' of Hst 5, giving DSHAKRHHGYKRKFHEK and HHSHRGY peptides. Simultaneously, the DSHAKRHHGYKRK peptide is also formed. Further fragmentation by SAP2 results in FHEK and DSHAKRHHGY products. The polypeptide is Secreted aspartic protease 2 (Candida albicans (Yeast)).